The sequence spans 355 residues: UPF0421 protein BCE_2776 (355 aa).

A run of 4 helical transmembrane segments spans residues 19–39, 74–94, 109–129, and 131–151; these read IAVF…IFAV, FTFF…FTIV, TLTA…AFLI, and LATT…ILPP.

Belongs to the UPF0421 family.

It localises to the cell membrane. The sequence is that of UPF0421 protein BCE_2776 from Bacillus cereus (strain ATCC 10987 / NRS 248).